A 46-amino-acid polypeptide reads, in one-letter code: Thymosin beta-a (46 aa).

Residues 21–30 are compositionally biased toward polar residues; sequence TNTAEKNTLP. Positions 21–46 are disordered; it reads TNTAEKNTLPTKEDIDQEKKAAEGGK. A compositionally biased stretch (basic and acidic residues) spans 31–46; it reads TKEDIDQEKKAAEGGK.

It belongs to the thymosin beta family.

Its subcellular location is the cytoplasm. It localises to the cytoskeleton. Its function is as follows. Plays an important role in the organization of the cytoskeleton. Binds to and sequesters actin monomers (G actin) and therefore inhibits actin polymerization. The chain is Thymosin beta-a from Cyprinus carpio (Common carp).